The chain runs to 165 residues: Crossover junction endodeoxyribonuclease RuvC (165 aa).

Catalysis depends on residues aspartate 8, glutamate 67, and aspartate 139. Mg(2+)-binding residues include aspartate 8, glutamate 67, and aspartate 139.

It belongs to the RuvC family. In terms of assembly, homodimer which binds Holliday junction (HJ) DNA. The HJ becomes 2-fold symmetrical on binding to RuvC with unstacked arms; it has a different conformation from HJ DNA in complex with RuvA. In the full resolvosome a probable DNA-RuvA(4)-RuvB(12)-RuvC(2) complex forms which resolves the HJ. Mg(2+) is required as a cofactor.

It is found in the cytoplasm. The enzyme catalyses Endonucleolytic cleavage at a junction such as a reciprocal single-stranded crossover between two homologous DNA duplexes (Holliday junction).. Functionally, the RuvA-RuvB-RuvC complex processes Holliday junction (HJ) DNA during genetic recombination and DNA repair. Endonuclease that resolves HJ intermediates. Cleaves cruciform DNA by making single-stranded nicks across the HJ at symmetrical positions within the homologous arms, yielding a 5'-phosphate and a 3'-hydroxyl group; requires a central core of homology in the junction. The consensus cleavage sequence is 5'-(A/T)TT(C/G)-3'. Cleavage occurs on the 3'-side of the TT dinucleotide at the point of strand exchange. HJ branch migration catalyzed by RuvA-RuvB allows RuvC to scan DNA until it finds its consensus sequence, where it cleaves and resolves the cruciform DNA. The protein is Crossover junction endodeoxyribonuclease RuvC of Alkalilimnicola ehrlichii (strain ATCC BAA-1101 / DSM 17681 / MLHE-1).